Consider the following 72-residue polypeptide: Translation initiation factor IF-1 2 (72 aa).

In terms of domain architecture, S1-like spans 1-72; that stretch reads MAKEDVIEMQ…TKGRIVFRTK (72 aa).

Belongs to the IF-1 family. As to quaternary structure, component of the 30S ribosomal translation pre-initiation complex which assembles on the 30S ribosome in the order IF-2 and IF-3, IF-1 and N-formylmethionyl-tRNA(fMet); mRNA recruitment can occur at any time during PIC assembly.

The protein resides in the cytoplasm. One of the essential components for the initiation of protein synthesis. Stabilizes the binding of IF-2 and IF-3 on the 30S subunit to which N-formylmethionyl-tRNA(fMet) subsequently binds. Helps modulate mRNA selection, yielding the 30S pre-initiation complex (PIC). Upon addition of the 50S ribosomal subunit IF-1, IF-2 and IF-3 are released leaving the mature 70S translation initiation complex. The sequence is that of Translation initiation factor IF-1 2 from Azoarcus sp. (strain BH72).